Consider the following 453-residue polypeptide: Collagen alpha-4(IV) chain (453 aa).

The interval 1–218 (GPPGPPGAPG…PPGPMGDPGP (218 aa)) is disordered. The tract at residues 1–222 (GPPGPPGAPG…MGDPGPIGFG (222 aa)) is triple-helical region. Pro residues-rich tracts occupy residues 26–44 (QGPP…PGPP), 60–72 (PGPP…PGPP), and 95–122 (PQGP…PLGP). Low complexity predominate over residues 153–162 (PEGTMGLPGM). Positions 174–183 (PGLDGRRGED) are enriched in basic and acidic residues. The segment covering 206 to 215 (APGPPGPMGD) has biased composition (pro residues). The 226-residue stretch at 228–453 (GFLLVLHSQT…SRCQVCVKHS (226 aa)) folds into the Collagen IV NC1 domain. Cystine bridges form between Cys-243–Cys-332, Cys-276–Cys-329, Cys-288–Cys-294, Cys-351–Cys-449, Cys-385–Cys-446, and Cys-397–Cys-404.

This sequence belongs to the type IV collagen family. As to quaternary structure, there are six type IV collagen isoforms, alpha 1(IV)-alpha 6(IV), each of which can form a triple helix structure with 2 other chains to generate type IV collagen network. The alpha 3(IV) chain forms a triple helical protomer with alpha 4(IV) and alpha 5(IV); this triple helical structure dimerizes through NC1-NC1 domain interactions such that the alpha 3(IV), alpha 4(IV) and alpha 5(IV) chains of one protomer connect with the alpha 5(IV), alpha 4(IV) and alpha 3(IV) chains of the opposite protomer, respectively. Associates with LAMB2 at the neuromuscular junction and in GBM. In terms of processing, prolines at the third position of the tripeptide repeating unit (G-X-Y) are hydroxylated in some or all of the chains. Post-translationally, type IV collagens contain numerous cysteine residues which are involved in inter- and intramolecular disulfide bonding. 12 of these, located in the NC1 domain, are conserved in all known type IV collagens. The trimeric structure of the NC1 domains is stabilized by covalent bonds between Lys and Met residues. In terms of tissue distribution, alpha 3 and alpha 4 type IV collagens are colocalized and present only in basement membranes of kidney, eye, cochlea, lung and brain.

Its subcellular location is the secreted. It is found in the extracellular space. The protein localises to the extracellular matrix. The protein resides in the basement membrane. Functionally, type IV collagen is the major structural component of glomerular basement membranes (GBM), forming a 'chicken-wire' meshwork together with laminins, proteoglycans and entactin/nidogen. The protein is Collagen alpha-4(IV) chain (COL4A4) of Bos taurus (Bovine).